Consider the following 378-residue polypeptide: tRNA (guanine(26)-N(2))-dimethyltransferase (378 aa).

Positions 4–374 (KEVTEGKVRI…KGYEEIIRCV (371 aa)) constitute a Trm1 methyltransferase domain. Positions 44, 69, 87, 114, and 115 each coordinate S-adenosyl-L-methionine. Zn(2+)-binding residues include Cys-246, Cys-249, Cys-263, and Cys-266.

Belongs to the class I-like SAM-binding methyltransferase superfamily. Trm1 family.

It catalyses the reaction guanosine(26) in tRNA + 2 S-adenosyl-L-methionine = N(2)-dimethylguanosine(26) in tRNA + 2 S-adenosyl-L-homocysteine + 2 H(+). Its function is as follows. Dimethylates a single guanine residue at position 26 of a number of tRNAs using S-adenosyl-L-methionine as donor of the methyl groups. The protein is tRNA (guanine(26)-N(2))-dimethyltransferase of Saccharolobus islandicus (strain M.16.27) (Sulfolobus islandicus).